The chain runs to 76 residues: Brevinin-2ISa (76 aa).

Positions 1–22 (MFNMKKSLLLLFFLGTISLSLC) are cleaved as a signal peptide. Positions 23-41 (EEERDADEDDGVEMTEEEV) are cleaved as a propeptide — removed in mature form. A disulfide bond links Cys70 and Cys76.

Expressed by the skin glands.

The protein localises to the secreted. Its function is as follows. Has antimicrobial activity against Gram-negative bacterium E.coli ATCC 8739 (MIC=50 ug), against Gram positive bacteria S.aureus ATCC 6538 (MIC=12.5 ug), methicillin-resistant S.aureus ATCC 43300 (MIC=100 ug) and B.subtilis ATCC 6633 (MIC=12.5 ug). Has no activity against fungus C.albicans ATCC 90028. The sequence is that of Brevinin-2ISa from Odorrana ishikawae (Ishikawa's frog).